The following is an 892-amino-acid chain: Alanine--tRNA ligase (892 aa).

The Zn(2+) site is built by H596, H600, C700, and H704.

Belongs to the class-II aminoacyl-tRNA synthetase family. It depends on Zn(2+) as a cofactor.

It is found in the cytoplasm. It catalyses the reaction tRNA(Ala) + L-alanine + ATP = L-alanyl-tRNA(Ala) + AMP + diphosphate. Its function is as follows. Catalyzes the attachment of alanine to tRNA(Ala) in a two-step reaction: alanine is first activated by ATP to form Ala-AMP and then transferred to the acceptor end of tRNA(Ala). Also edits incorrectly charged Ser-tRNA(Ala) and Gly-tRNA(Ala) via its editing domain. The polypeptide is Alanine--tRNA ligase (Methanococcus maripaludis (strain C5 / ATCC BAA-1333)).